A 263-amino-acid polypeptide reads, in one-letter code: Putative hydro-lyase Psyc_1103 (263 aa).

This sequence belongs to the D-glutamate cyclase family.

The sequence is that of Putative hydro-lyase Psyc_1103 from Psychrobacter arcticus (strain DSM 17307 / VKM B-2377 / 273-4).